The sequence spans 305 residues: 5'-hydroxyaverantin dehydrogenase stcG (305 aa).

Residues Ser-25, Leu-27, Gln-48, Asp-68, Tyr-186, Lys-190, and Ser-221 each coordinate NADP(+). Tyr-186 acts as the Proton acceptor in catalysis. The active-site Lowers pKa of active site Tyr is the Lys-190.

Belongs to the short-chain dehydrogenases/reductases (SDR) family.

It carries out the reaction (1'S,5'S)-5'-hydroxyaverantin + NAD(+) = (S)-5'-oxoaverantin + NADH + H(+). It catalyses the reaction (1'S,5'R)-5'-hydroxyaverantin + NAD(+) = (S)-5'-oxoaverantin + NADH + 2 H(+). It participates in mycotoxin biosynthesis; sterigmatocystin biosynthesis. 5'-hydroxyaverantin dehydrogenase; part of the gene cluster that mediates the biosynthesis of sterigmatocystin (ST), a polyketide-derived furanocoumarin which is part of the most toxic and carcinogenic compounds among the known mycotoxins. The first step in the biosynthesis of sterigmatocystin is the production of hexanoate by the fatty acid synthase (FAS) units stcJ and stcK. The polyketide backbone is assembled by the non-reducing polyketide synthase stcA by condensation of the starter hexanoyl-CoA and 7 malonyl-CoA extender units followed by cyclization and release of norsolorinic acid. Norsolorinic acid is the first stable intermediate in the biosynthesis of sterigmatocystin and is converted into averantin (AVN) by the ketoreductase stcE which reduces the hexanoate ketone to an alcohol. Averantin is then oxidized into 5'-hydroxyaverantin (HAVN) by the cytochrome P450 monooxygenase stcF. 5'-hydroxyaverantin is further converted to 5'-oxyaverantin (OAVN) by the 5'-hydroxyaverantin dehydrogenase stcG. The next step is the conversion of OAVN into averufin (AVF) which is catalyzed by a yet to be identified enzyme. The cytochrome P450 monooxygenase stcB and the flavin-binding monooxygenase stcW are both required for the conversion of averufin to 1-hydroxyversicolorone. The esterase stcI probably catalyzes the formation of versiconal hemiacetal acetate from 1-hydroxyversicolorone. The oxydoreductase stcN then probably catalyzes the biosynthetic step from versiconal to versicolorin B (VERB). The next step is performed by the versicolorin B desaturase stcL to produce versicolorin A (VERA). The ketoreductase stcU and the cytochrome P450 monooxygenase stcS are involved in the conversion of versicolorin A to demethylsterigmatocystin. The Baeyer-Villiger oxidas stcQ and the reductase stcR might be involved in the biosynthetic step from versicolorin A to demethylsterigmatocystin. The final step in the biosynthesis of sterigmatocystin is the methylation of demethylsterigmatocystin catalyzed by the methyltransferase stcP. The sequence is that of 5'-hydroxyaverantin dehydrogenase stcG from Emericella nidulans (strain FGSC A4 / ATCC 38163 / CBS 112.46 / NRRL 194 / M139) (Aspergillus nidulans).